A 398-amino-acid chain; its full sequence is Cystathionine gamma-lyase (398 aa).

The residue at position 50 (Ser50) is a Phosphoserine. 3 residues coordinate substrate: Arg61, Tyr113, and Arg118. N6-(pyridoxal phosphate)lysine is present on Lys211. Glu338 provides a ligand contact to substrate.

Belongs to the trans-sulfuration enzymes family. In terms of assembly, homotetramer. Interacts with CALM in a calcium-dependent manner. Pyridoxal 5'-phosphate is required as a cofactor.

The protein localises to the cytoplasm. It carries out the reaction L,L-cystathionine + H2O = 2-oxobutanoate + L-cysteine + NH4(+). It catalyses the reaction L-homoserine = 2-oxobutanoate + NH4(+). The enzyme catalyses L-selenocystathionine + H2O = L-selenocysteine + 2-oxobutanoate + NH4(+). The catalysed reaction is L-cysteine + H2O = hydrogen sulfide + pyruvate + NH4(+) + H(+). It carries out the reaction L-homocysteine + H2O = 2-oxobutanoate + hydrogen sulfide + NH4(+) + H(+). The protein operates within amino-acid biosynthesis; L-cysteine biosynthesis; L-cysteine from L-homocysteine and L-serine: step 2/2. Functionally, catalyzes the last step in the trans-sulfuration pathway from L-methionine to L-cysteine in a pyridoxal-5'-phosphate (PLP)-dependent manner, which consists on cleaving the L,L-cystathionine molecule into L-cysteine, ammonia and 2-oxobutanoate. Part of the L-cysteine derived from the trans-sulfuration pathway is utilized for biosynthesis of the ubiquitous antioxidant glutathione. Besides its role in the conversion of L-cystathionine into L-cysteine, it utilizes L-cysteine and L-homocysteine as substrates (at much lower rates than L,L-cystathionine) to produce hydrogen sulfide (H2S). In vitro, it converts two L-cysteine molecules into lanthionine and H2S, and two L-homocysteine molecules to homolanthionine and H2S, which can be particularly relevant under conditions of severe hyperhomocysteinemia. Lanthionine and homolanthionine are structural homologs of L,L-cystathionine that differ by the absence or presence of an extra methylene group, respectively. Acts as a cysteine-protein sulfhydrase by mediating sulfhydration of target proteins: sulfhydration consists of converting -SH groups into -SSH on specific cysteine residues of target proteins such as GAPDH, PTPN1 and NF-kappa-B subunit RELA, thereby regulating their function. By generating the gasotransmitter H2S, it participates in a number of physiological processes such as vasodilation, bone protection, and inflammation. Plays an essential role in myogenesis by contributing to the biogenesis of H2S in skeletal muscle tissue. Can also accept homoserine as substrate. Catalyzes the elimination of selenocystathionine (which can be derived from the diet) to yield selenocysteine, ammonia and 2-oxobutanoate. This is Cystathionine gamma-lyase (Cth) from Rattus norvegicus (Rat).